A 1180-amino-acid chain; its full sequence is DNA-directed RNA polymerase subunit beta (1180 aa).

The segment covering 1154–1164 has biased composition (acidic residues); the sequence is EMKELDDEDEQ. The tract at residues 1154 to 1180 is disordered; sequence EMKELDDEDEQASDKLNLNIDSTESNV. Over residues 1167–1180 the composition is skewed to polar residues; the sequence is DKLNLNIDSTESNV.

It belongs to the RNA polymerase beta chain family. The RNAP catalytic core consists of 2 alpha, 1 beta, 1 beta' and 1 omega subunit. When a sigma factor is associated with the core the holoenzyme is formed, which can initiate transcription.

The enzyme catalyses RNA(n) + a ribonucleoside 5'-triphosphate = RNA(n+1) + diphosphate. In terms of biological role, DNA-dependent RNA polymerase catalyzes the transcription of DNA into RNA using the four ribonucleoside triphosphates as substrates. The chain is DNA-directed RNA polymerase subunit beta from Halalkalibacterium halodurans (strain ATCC BAA-125 / DSM 18197 / FERM 7344 / JCM 9153 / C-125) (Bacillus halodurans).